The following is a 552-amino-acid chain: Scavenger receptor class B member 1 (552 aa).

Residues 1-11 (MGCSAKARWAA) lie on the Cytoplasmic side of the membrane. The chain crosses the membrane as a helical span at residues 12 to 32 (GALGVAGLLCAVLGAVMIVMV). The Extracellular segment spans residues 33 to 443 (PSLIKQQVLK…LVLMPKVMHY (411 aa)). N-linked (GlcNAc...) asparagine glycosylation is found at Asn102, Asn108, Asn173, Asn212, Asn227, Asn255, Asn310, Asn330, and Asn383. A disulfide bridge links Cys251 with Cys384. Tyr393 and Val458 each carry phosphoserine. A helical transmembrane segment spans residues 444-464 (AQYVLLALGCVLLLVPVICQI). Cys462 carries S-palmitoyl cysteine lipidation. The Cytoplasmic portion of the chain corresponds to 465–552 (RSQVGAGQRA…GPSLGGGTGS (88 aa)). At Thr493 the chain carries Phosphoserine.

This sequence belongs to the CD36 family. In terms of assembly, the C-terminal region binds to PDZK1. As to quaternary structure, (Microbial infection) Interacts with hepatitis C virus E1:E2 glycoproteins. Post-translationally, N-glycosylated. The six cysteines of the extracellular domain are all involved in intramolecular disulfide bonds. In terms of tissue distribution, widely expressed.

Its subcellular location is the cell membrane. The protein resides in the membrane. It is found in the caveola. Functionally, receptor for different ligands such as phospholipids, cholesterol ester, lipoproteins, phosphatidylserine and apoptotic cells. Receptor for HDL, mediating selective uptake of cholesteryl ether and HDL-dependent cholesterol efflux. Also facilitates the flux of free and esterified cholesterol between the cell surface and apoB-containing lipoproteins and modified lipoproteins, although less efficiently than HDL. May be involved in the phagocytosis of apoptotic cells, via its phosphatidylserine binding activity. In terms of biological role, (Microbial infection) Acts as a receptor for hepatitis C virus in hepatocytes and appears to facilitate its cell entry. Binding between SCARB1 and the hepatitis C virus glycoprotein E2 is independent of the genotype of the viral isolate. (Microbial infection) Mediates uptake of M.fortuitum, E.coli and S.aureus. Its function is as follows. (Microbial infection) Facilitates the entry of human coronavirus SARS-CoV-2 by acting as an entry cofactor through HDL binding. The protein is Scavenger receptor class B member 1 (SCARB1) of Homo sapiens (Human).